An 88-amino-acid polypeptide reads, in one-letter code: Transmembrane protein 069R (88 aa).

2 helical membrane-spanning segments follow: residues 30 to 50 (ALWP…VFTA) and 67 to 87 (VGVF…GDSF).

It is found in the host membrane. The polypeptide is Transmembrane protein 069R (Frog virus 3 (isolate Goorha) (FV-3)).